The primary structure comprises 205 residues: Potassium-transporting ATPase KdpC subunit (205 aa).

A helical transmembrane segment spans residues 9–29; it reads VFAVLFLFILGFVYPTVTSLI.

The protein belongs to the KdpC family. As to quaternary structure, the system is composed of three essential subunits: KdpA, KdpB and KdpC.

The protein localises to the cell membrane. In terms of biological role, part of the high-affinity ATP-driven potassium transport (or Kdp) system, which catalyzes the hydrolysis of ATP coupled with the electrogenic transport of potassium into the cytoplasm. This subunit acts as a catalytic chaperone that increases the ATP-binding affinity of the ATP-hydrolyzing subunit KdpB by the formation of a transient KdpB/KdpC/ATP ternary complex. This chain is Potassium-transporting ATPase KdpC subunit, found in Thermoplasma acidophilum (strain ATCC 25905 / DSM 1728 / JCM 9062 / NBRC 15155 / AMRC-C165).